The sequence spans 831 residues: uncharacterized protein (831 aa).

Positions 285–311 (ALNLKRQQLKEEQKEQQSTGDRSDVST) are disordered. An ATP-binding site is contributed by 470 to 477 (GDTGNGKS).

This is an uncharacterized protein from Bacillus subtilis (strain 168).